Reading from the N-terminus, the 90-residue chain is Antitoxin epsilon 1 (90 aa).

Belongs to the epsilon antitoxin family. As to quaternary structure, in the presence of the zeta toxin, forms an inactive PezA(2)PezT(2) heterotetramer.

In terms of biological role, antitoxin component of a type II toxin-antitoxin (TA) system. Neutralizes the toxic effect of zeta toxin. Part of a postsegregational killing (PSK) system involved in the killing of plasmid-free cells. Continuous synthesis of the epsilon antitoxin is required to counteract the zeta toxin. The protein is Antitoxin epsilon 1 of Enterococcus faecalis (Streptococcus faecalis).